Here is a 72-residue protein sequence, read N- to C-terminus: MQKLIILLLVAAVLMSTQALFQEKRPKEKIDLLSKRKTDAEKQQKRYCSDDSQPCSHFYDCCKWSCNNGYCP.

The signal sequence occupies residues 1-19 (MQKLIILLLVAAVLMSTQA). A propeptide spanning residues 20 to 44 (LFQEKRPKEKIDLLSKRKTDAEKQQ) is cleaved from the precursor. Intrachain disulfides connect cysteine 48–cysteine 62, cysteine 55–cysteine 66, and cysteine 61–cysteine 71.

It belongs to the conotoxin O2 superfamily. Expressed by the venom duct.

The protein resides in the secreted. In terms of biological role, inhibits voltage-gated ion channels. This is Conotoxin Vc6.16 from Conus victoriae (Queen Victoria cone).